The chain runs to 223 residues: Small ribosomal subunit protein uS3 (223 aa).

In terms of domain architecture, KH type-2 spans 38 to 106 (LKAELKEKLK…EVYIDIQEVH (69 aa)).

It belongs to the universal ribosomal protein uS3 family. As to quaternary structure, part of the 30S ribosomal subunit. Forms a tight complex with proteins S10 and S14.

Binds the lower part of the 30S subunit head. Binds mRNA in the 70S ribosome, positioning it for translation. In Koribacter versatilis (strain Ellin345), this protein is Small ribosomal subunit protein uS3.